A 109-amino-acid chain; its full sequence is Cell division suppressor protein YneA (109 aa).

One can recognise a LysM domain in the interval 39-90 (SEVNVNEGDSLWALADQYAGKSDMAKADFVSWVEKENNLSDGHVEAGDSVVI).

The protein belongs to the YneA family.

It is found in the cytoplasm. Functionally, inhibits cell division during the SOS response. Affects a later stage of the cell division protein assembly, after the assembly of the Z ring, by probably suppressing recruitment of FtsL and/or DivIC to the division machinery. The sequence is that of Cell division suppressor protein YneA from Listeria monocytogenes serovar 1/2a (strain ATCC BAA-679 / EGD-e).